The sequence spans 191 residues: MYQDLIRSELNEAAEVLNKFLSDDHNIAQIEAAAKMIADSFKQDGKVLSCGNGGSHCDAMHFAEELTGRYRDNRPGYAGIAISDPSHLSCVSNDFGYDFVFSRYVEAVGRKGDVLFGLSTSGNSGNILKAIEAAKAKGMKTVALTGKDGGKMAGLADVEIRVPHFGYADRIQEVHIKIIHIIIQLIEKEME.

The SIS domain maps to 37–191 (IADSFKQDGK…IIQLIEKEME (155 aa)). A substrate-binding site is contributed by 52–54 (NGG). 2 residues coordinate Zn(2+): His-61 and Glu-65. Substrate-binding positions include Glu-65, 93 to 94 (ND), 119 to 121 (STS), Ser-124, and Gln-172. Residues Gln-172 and His-180 each coordinate Zn(2+).

It belongs to the SIS family. GmhA subfamily. As to quaternary structure, homotetramer. Zn(2+) serves as cofactor.

The protein resides in the cytoplasm. The catalysed reaction is 2 D-sedoheptulose 7-phosphate = D-glycero-alpha-D-manno-heptose 7-phosphate + D-glycero-beta-D-manno-heptose 7-phosphate. It participates in carbohydrate biosynthesis; D-glycero-D-manno-heptose 7-phosphate biosynthesis; D-glycero-alpha-D-manno-heptose 7-phosphate and D-glycero-beta-D-manno-heptose 7-phosphate from sedoheptulose 7-phosphate: step 1/1. Its pathway is bacterial outer membrane biogenesis; LPS core biosynthesis. Functionally, catalyzes the isomerization of sedoheptulose 7-phosphate in D-glycero-D-manno-heptose 7-phosphate. This Vibrio parahaemolyticus serotype O3:K6 (strain RIMD 2210633) protein is Phosphoheptose isomerase.